The following is a 513-amino-acid chain: MALSQYTSLSTELVLATAIFCIVFWVARALRTQVPKGLKTPPGPWGLPILGHVLTLGKNPHLSLTKLSKQYGDVLQIRIGSTPVVVLSGLDTIRQALVRQGDDFKGRPDLYSFTLITNGKSMTFNPDCGPVWAARRRLAQDALKSFSIASDPTSASSCYLEDHVIKEANHLVSKLQKLTAEVGHFEPVNQVVESVANVIGAMCFGKNFPRKSEEMLRIVKGSSDFVENVSSGNAVDFFPILRYLPNPDLKRFKNFNDNFVLFLQKTVQEHYQDFNKNSIQDITGALFKHSENSKDSGGLIPQEKIVNIVNDLFGAGFDTVTTAITLSILLLVTWPNVQRKIHKELDTVIGRDRQPRLSDRLQLPYMEAFILELYRYTSFVPFTIPHSTTRDTSLNGFYIPKDRCIFINQWQVNHDEKQWKDPFVFRPERFLTDNDTVINKTLSEKVMLFGLGKRRCIGEIPAKWEVFLFLAILLQQLEFSVPPGTKVDLTPTYGLTMKPQTCKYIQAWPRFSK.

O-linked (GlcNAc) serine glycosylation is present at Ser68. Position 225 (Phe225) interacts with substrate. Heme is bound at residue Cys456.

It belongs to the cytochrome P450 family. Interacts with PGRMC1; the interaction requires PGRMC1 homodimerization. It depends on heme as a cofactor. Found in lung and liver.

It is found in the endoplasmic reticulum membrane. The protein resides in the microsome membrane. It carries out the reaction an organic molecule + reduced [NADPH--hemoprotein reductase] + O2 = an alcohol + oxidized [NADPH--hemoprotein reductase] + H2O + H(+). The enzyme catalyses 17beta-estradiol + reduced [NADPH--hemoprotein reductase] + O2 = 2-hydroxy-17beta-estradiol + oxidized [NADPH--hemoprotein reductase] + H2O + H(+). The catalysed reaction is 17beta-estradiol + reduced [NADPH--hemoprotein reductase] + O2 = 4-hydroxy-17beta-estradiol + oxidized [NADPH--hemoprotein reductase] + H2O + H(+). It catalyses the reaction estrone + reduced [NADPH--hemoprotein reductase] + O2 = 2-hydroxyestrone + oxidized [NADPH--hemoprotein reductase] + H2O + H(+). It carries out the reaction estrone + reduced [NADPH--hemoprotein reductase] + O2 = 4-hydroxyestrone + oxidized [NADPH--hemoprotein reductase] + H2O + H(+). The enzyme catalyses cholesterol + reduced [NADPH--hemoprotein reductase] + O2 = 25-hydroxycholesterol + oxidized [NADPH--hemoprotein reductase] + H2O + H(+). The catalysed reaction is all-trans-retinol + reduced [NADPH--hemoprotein reductase] + O2 = all-trans-retinal + oxidized [NADPH--hemoprotein reductase] + 2 H2O + H(+). It catalyses the reaction all-trans-retinal + reduced [NADPH--hemoprotein reductase] + O2 = all-trans-retinoate + oxidized [NADPH--hemoprotein reductase] + H2O + 2 H(+). It carries out the reaction (5Z,8Z,11Z,14Z)-eicosatetraenoate + reduced [NADPH--hemoprotein reductase] + O2 = (14R,15S)-epoxy-(5Z,8Z,11Z)-eicosatrienoate + oxidized [NADPH--hemoprotein reductase] + H2O + H(+). The enzyme catalyses (5Z,8Z,11Z,14Z)-eicosatetraenoate + reduced [NADPH--hemoprotein reductase] + O2 = (14S,15R)-epoxy-(5Z,8Z,11Z)-eicosatrienoate + oxidized [NADPH--hemoprotein reductase] + H2O + H(+). The catalysed reaction is (5Z,8Z,11Z,14Z,17Z)-eicosapentaenoate + reduced [NADPH--hemoprotein reductase] + O2 = (17R,18S)-epoxy-(5Z,8Z,11Z,14Z)-eicosatetraenoate + oxidized [NADPH--hemoprotein reductase] + H2O + H(+). It catalyses the reaction (4Z,7Z,10Z,13Z,16Z,19Z)-docosahexaenoate + reduced [NADPH--hemoprotein reductase] + O2 = (19R,20S)-epoxy-(4Z,7Z,10Z,13Z,16Z)-docosapentaenoate + oxidized [NADPH--hemoprotein reductase] + H2O + H(+). It carries out the reaction (5S)-hydroperoxy-(6E,8Z,11Z,14Z)-eicosatetraenoate = 5-oxo-(6E,8Z,11Z,14Z)-eicosatetraenoate + H2O. The enzyme catalyses (12S)-hydroperoxy-(5Z,8Z,10E,14Z)-eicosatetraenoate = 12-oxo-(5Z,8Z,10E,14Z)-eicosatetraenoate + H2O. The catalysed reaction is (15S)-hydroperoxy-(5Z,8Z,11Z,13E)-eicosatetraenoate = 15-oxo-(5Z,8Z,11Z,13E)-eicosatetraenoate + H2O. It catalyses the reaction (13S)-hydroperoxy-(9Z,11E)-octadecadienoate = 13-oxo-(9Z,11E)-octadecadienoate + H2O. It carries out the reaction (5Z,8Z,11Z,14Z)-eicosatetraenoate + reduced [NADPH--hemoprotein reductase] + O2 = 13-hydroxy-(5Z,8Z,11Z,14Z)-eicosatetraenoate + oxidized [NADPH--hemoprotein reductase] + H2O + H(+). The enzyme catalyses (5Z,8Z,11Z,14Z)-eicosatetraenoate + reduced [NADPH--hemoprotein reductase] + O2 = 19-hydroxy-(5Z,8Z,11Z,14Z)-eicosatetraenoate + oxidized [NADPH--hemoprotein reductase] + H2O + H(+). The catalysed reaction is (9Z,12Z)-octadecadienoate + reduced [NADPH--hemoprotein reductase] + O2 = 11-hydroxy-(9Z,12Z)-octadecadienoate + oxidized [NADPH--hemoprotein reductase] + H2O + H(+). It functions in the pathway cofactor metabolism; retinol metabolism. It participates in steroid metabolism; cholesterol metabolism. The protein operates within lipid metabolism; arachidonate metabolism. Functionally, a cytochrome P450 monooxygenase involved in the metabolism of various endogenous substrates, including fatty acids, steroid hormones and vitamins. Mechanistically, uses molecular oxygen inserting one oxygen atom into a substrate, and reducing the second into a water molecule, with two electrons provided by NADPH via cytochrome P450 reductase (NADPH--hemoprotein reductase). Catalyzes the hydroxylation of carbon-hydrogen bonds. Exhibits high catalytic activity for the formation of hydroxyestrogens from estrone (E1) and 17beta-estradiol (E2), namely 2-hydroxy E1 and E2. Metabolizes cholesterol toward 25-hydroxycholesterol, a physiological regulator of cellular cholesterol homeostasis. May act as a major enzyme for all-trans retinoic acid biosynthesis in the liver. Catalyzes two successive oxidative transformation of all-trans retinol to all-trans retinal and then to the active form all-trans retinoic acid. Primarily catalyzes stereoselective epoxidation of the last double bond of polyunsaturated fatty acids (PUFA), displaying a strong preference for the (R,S) stereoisomer. Catalyzes bisallylic hydroxylation and omega-1 hydroxylation of PUFA. May also participate in eicosanoids metabolism by converting hydroperoxide species into oxo metabolites (lipoxygenase-like reaction, NADPH-independent). Plays a role in the oxidative metabolism of xenobiotics. Catalyzes the N-hydroxylation of heterocyclic amines and the O-deethylation of phenacetin. Metabolizes caffeine via N3-demethylation. The chain is Cytochrome P450 1A2 (CYP1A2) from Mesocricetus auratus (Golden hamster).